The sequence spans 210 residues: MSDAKELKQVLTGPIVNNNPIALQVLGVCSALAVTSKLETALVMALALTAVTAFSNLFISMIRNHIPSSVRIIVQMTIIASLVIVVDQLLQAYAYQISKQLSVFVGLIITNCIVMGRAEAYAMKTPPMMSFMDGIGNGLGYGAILLAVGFVRELFGNGSLFGVQILHKISDGGWYQPNGLLLLPPSAFFLIGMLIWIIRTYKPEQVEAKG.

The next 6 helical transmembrane spans lie at 14–34 (PIVN…ALAV), 42–62 (LVMA…ISMI), 72–92 (IIVQ…LLQA), 103–123 (VFVG…AYAM), 131–151 (FMDG…VGFV), and 178–198 (NGLL…IWII).

This sequence belongs to the NqrDE/RnfAE family. Composed of six subunits; NqrA, NqrB, NqrC, NqrD, NqrE and NqrF.

It is found in the cell inner membrane. The catalysed reaction is a ubiquinone + n Na(+)(in) + NADH + H(+) = a ubiquinol + n Na(+)(out) + NAD(+). Its function is as follows. NQR complex catalyzes the reduction of ubiquinone-1 to ubiquinol by two successive reactions, coupled with the transport of Na(+) ions from the cytoplasm to the periplasm. NqrA to NqrE are probably involved in the second step, the conversion of ubisemiquinone to ubiquinol. The sequence is that of Na(+)-translocating NADH-quinone reductase subunit D from Shewanella oneidensis (strain ATCC 700550 / JCM 31522 / CIP 106686 / LMG 19005 / NCIMB 14063 / MR-1).